The following is a 71-amino-acid chain: Beta-defensin 131A (71 aa).

The N-terminal stretch at Met1–Ser22 is a signal peptide. Intrachain disulfides connect Cys29–Cys57, Cys37–Cys51, and Cys41–Cys58.

The protein belongs to the beta-defensin family.

The protein localises to the secreted. In terms of biological role, has antibacterial activity. Upon stimulation with lipoteichoic acid, promotes cytokines and chemokines production and secretion. This Pan troglodytes (Chimpanzee) protein is Beta-defensin 131A.